Reading from the N-terminus, the 1220-residue chain is DNA-directed RNA polymerase subunit beta (1220 aa).

This sequence belongs to the RNA polymerase beta chain family. In terms of assembly, the RNAP catalytic core consists of 2 alpha, 1 beta, 1 beta' and 1 omega subunit. When a sigma factor is associated with the core the holoenzyme is formed, which can initiate transcription.

The catalysed reaction is RNA(n) + a ribonucleoside 5'-triphosphate = RNA(n+1) + diphosphate. Its function is as follows. DNA-dependent RNA polymerase catalyzes the transcription of DNA into RNA using the four ribonucleoside triphosphates as substrates. The sequence is that of DNA-directed RNA polymerase subunit beta from Mesomycoplasma hyopneumoniae (strain J / ATCC 25934 / NCTC 10110) (Mycoplasma hyopneumoniae).